The following is a 2167-amino-acid chain: GTPase-activating protein BEM2/IPL2 (2167 aa).

Disordered stretches follow at residues 1-209, 243-305, and 353-372; these read MKGL…NDNE, TNYN…ASAR, and NSSI…NNQA. The segment covering 12 to 51 has biased composition (low complexity); sequence SSTASASSSSTSTSHKTTTASTASSSSPSSSSQTIRNSTS. Lys27 is covalently cross-linked (Glycyl lysine isopeptide (Lys-Gly) (interchain with G-Cter in ubiquitin)). Basic residues predominate over residues 58–70; the sequence is HSHHHHGQGHSHH. The segment covering 89 to 118 has biased composition (polar residues); sequence KQYTSTSSSQVNLGMYHSDTNTRSSRSIAS. Ser129 carries the post-translational modification Phosphoserine. Over residues 134–145 the composition is skewed to polar residues; it reads SNSSSQKSNAQD. Low complexity-rich tracts occupy residues 160–177 and 187–207; these read SLLP…SRCS and NTSG…NNND. Over residues 243–252 the composition is skewed to polar residues; sequence TNYNSSMTAP. Phosphoserine is present on Ser283. Low complexity predominate over residues 289 to 300; the sequence is SSSTTATNSGND. Residues 592 to 859 form the Ras-GEF domain; the sequence is DITTLADEVH…MKLSVQHEPP (268 aa). A phosphoserine mark is found at Ser1012 and Ser1016. Thr1038 bears the Phosphothreonine mark. A phosphoserine mark is found at Ser1046, Ser1054, and Ser1128. Positions 1771-1794 are enriched in polar residues; sequence ISGTHSDNDHSYNINKNTGQTPSL. The tract at residues 1771–1828 is disordered; it reads ISGTHSDNDHSYNINKNTGQTPSLGSVMESNNSARNRRDSRASFSTNRSSVVSNSSHN. Over residues 1812 to 1828 the composition is skewed to low complexity; the sequence is ASFSTNRSSVVSNSSHN. Residues 1846 to 1948 form the PH domain; the sequence is GFNTSSSNYS…WIKMIKASKR (103 aa). Residues 1967–2165 form the Rho-GAP domain; that stretch reads VPLEDVCERE…DFIKNPNDYF (199 aa).

GTPase-activating protein (GAP) for RHO1 and RHO2. Involved in the control of cellular morphogenesis. Required for proper bud site selection and bud emergence. This chain is GTPase-activating protein BEM2/IPL2 (BEM2), found in Saccharomyces cerevisiae (strain ATCC 204508 / S288c) (Baker's yeast).